Here is a 182-residue protein sequence, read N- to C-terminus: Adenylate kinase (182 aa).

12–17 (GAGKGT) serves as a coordination point for ATP. An NMP region spans residues 32–61 (STGELLRKEIDLDTYLGKQVKDIMNKGELV). Residues Thr33, Arg38, 59–61 (ELV), 85–88 (GYPR), and Gln92 contribute to the AMP site. The LID stretch occupies residues 126 to 132 (LRGRKDD). ATP is bound at residue Arg127. Residues Arg129 and Arg140 each contribute to the AMP site. Gly168 contacts ATP.

Belongs to the adenylate kinase family. In terms of assembly, monomer.

Its subcellular location is the cytoplasm. It carries out the reaction AMP + ATP = 2 ADP. It participates in purine metabolism; AMP biosynthesis via salvage pathway; AMP from ADP: step 1/1. In terms of biological role, catalyzes the reversible transfer of the terminal phosphate group between ATP and AMP. Plays an important role in cellular energy homeostasis and in adenine nucleotide metabolism. The sequence is that of Adenylate kinase from Prochlorococcus marinus (strain MIT 9515).